The primary structure comprises 207 residues: LexA repressor (207 aa).

The segment at residues V28–A48 is a DNA-binding region (H-T-H motif). Active-site for autocatalytic cleavage activity residues include S129 and K167.

Belongs to the peptidase S24 family. As to quaternary structure, homodimer.

The catalysed reaction is Hydrolysis of Ala-|-Gly bond in repressor LexA.. In terms of biological role, represses a number of genes involved in the response to DNA damage (SOS response), including recA and lexA. In the presence of single-stranded DNA, RecA interacts with LexA causing an autocatalytic cleavage which disrupts the DNA-binding part of LexA, leading to derepression of the SOS regulon and eventually DNA repair. This Geobacillus kaustophilus (strain HTA426) protein is LexA repressor.